We begin with the raw amino-acid sequence, 272 residues long: Phosphate import ATP-binding protein PstB (272 aa).

Positions 18–257 (VSMQNVTISY…FNDTQSIFNS (240 aa)) constitute an ABC transporter domain. 50–57 (GPSGCGKS) provides a ligand contact to ATP.

The protein belongs to the ABC transporter superfamily. Phosphate importer (TC 3.A.1.7) family. As to quaternary structure, the complex is composed of two ATP-binding proteins (PstB), two transmembrane proteins (PstC and PstA) and a solute-binding protein (PstS).

The protein localises to the cell inner membrane. The enzyme catalyses phosphate(out) + ATP + H2O = ADP + 2 phosphate(in) + H(+). Part of the ABC transporter complex PstSACB involved in phosphate import. Responsible for energy coupling to the transport system. This is Phosphate import ATP-binding protein PstB from Synechococcus sp. (strain CC9902).